We begin with the raw amino-acid sequence, 288 residues long: 2-dehydro-3-deoxyphosphooctonate aldolase (288 aa).

The protein belongs to the KdsA family.

It localises to the cytoplasm. The enzyme catalyses D-arabinose 5-phosphate + phosphoenolpyruvate + H2O = 3-deoxy-alpha-D-manno-2-octulosonate-8-phosphate + phosphate. It participates in carbohydrate biosynthesis; 3-deoxy-D-manno-octulosonate biosynthesis; 3-deoxy-D-manno-octulosonate from D-ribulose 5-phosphate: step 2/3. It functions in the pathway bacterial outer membrane biogenesis; lipopolysaccharide biosynthesis. The chain is 2-dehydro-3-deoxyphosphooctonate aldolase from Bdellovibrio bacteriovorus (strain ATCC 15356 / DSM 50701 / NCIMB 9529 / HD100).